We begin with the raw amino-acid sequence, 110 residues long: Ig kappa chain V region 3547 (110 aa).

The segment at 1 to 23 is framework-1; that stretch reads AYDMTQTPSSVSAAVGGTVTINC. The segment at 24-34 is complementarity-determining-1; it reads QASEDISANLA. The framework-2 stretch occupies residues 35-49; sequence WYQQKPGQPPKLLIY. A complementarity-determining-2 region spans residues 50–56; it reads AASDLAS. The interval 57–88 is framework-3; it reads GVPSRFKGSGSGTEYTLTISGVQCADAATYYC. Positions 89–99 are complementarity-determining-3; sequence QSADYSGSAVT. Positions 100-109 are framework-4; that stretch reads FGGGTEVVVK.

The protein is Ig kappa chain V region 3547 of Oryctolagus cuniculus (Rabbit).